The following is a 1377-amino-acid chain: DNA-directed RNA polymerase subunit beta' (1377 aa).

The Zn(2+) site is built by Cys-60, Cys-62, Cys-75, and Cys-78. Asp-449, Asp-451, and Asp-453 together coordinate Mg(2+). The Zn(2+) site is built by Cys-777, Cys-851, Cys-858, and Cys-861.

This sequence belongs to the RNA polymerase beta' chain family. In terms of assembly, the RNAP catalytic core consists of 2 alpha, 1 beta, 1 beta' and 1 omega subunit. When a sigma factor is associated with the core the holoenzyme is formed, which can initiate transcription. Mg(2+) is required as a cofactor. Zn(2+) serves as cofactor.

It catalyses the reaction RNA(n) + a ribonucleoside 5'-triphosphate = RNA(n+1) + diphosphate. Functionally, DNA-dependent RNA polymerase catalyzes the transcription of DNA into RNA using the four ribonucleoside triphosphates as substrates. The protein is DNA-directed RNA polymerase subunit beta' of Borreliella burgdorferi (strain ZS7) (Borrelia burgdorferi).